A 409-amino-acid polypeptide reads, in one-letter code: Lissencephaly-1 homolog (409 aa).

Positions 7–39 (RRERSNQAIADYLGSNGYTDALEAFRKEADMPN) constitute a LisH domain. The stretch at 54–81 (TSVIRLQKKVMELEAKLSEAEKEAIEGA) forms a coiled coil. 7 WD repeats span residues 104–145 (GHRA…RTLK), 146–185 (GHTD…ECVK), 189–228 (GHDH…CVKT), 231–270 (GHRE…CKAE), 273–332 (EHEN…CLFT), 335–374 (GHDN…CMKT), and 377–409 (AHSH…WECR).

This sequence belongs to the WD repeat LIS1/nudF family.

The protein localises to the cytoplasm. The protein resides in the cytoskeleton. Its subcellular location is the microtubule organizing center. It localises to the centrosome. Its function is as follows. Positively regulates the activity of the minus-end directed microtubule motor protein dynein. May enhance dynein-mediated microtubule sliding by targeting dynein to the microtubule plus end. Required for several dynein- and microtubule-dependent processes. This is Lissencephaly-1 homolog from Aedes aegypti (Yellowfever mosquito).